We begin with the raw amino-acid sequence, 102 residues long: Large ribosomal subunit protein bL21 (102 aa).

This sequence belongs to the bacterial ribosomal protein bL21 family. As to quaternary structure, part of the 50S ribosomal subunit. Contacts protein L20.

This protein binds to 23S rRNA in the presence of protein L20. This is Large ribosomal subunit protein bL21 from Geotalea daltonii (strain DSM 22248 / JCM 15807 / FRC-32) (Geobacter daltonii).